Consider the following 91-residue polypeptide: Transcription factor znf27 (91 aa).

Its subcellular location is the nucleus. Its function is as follows. Transcription factor; part of the gene cluster 27 that mediates the biosynthesis of asparasone A, a sclerotium-specific anthraquinone pigment important for sclerotial survival. Controls the expression of the non-reducing polyketide synthase (NRPKS) pks27. The protein is Transcription factor znf27 of Aspergillus flavus (strain ATCC 200026 / FGSC A1120 / IAM 13836 / NRRL 3357 / JCM 12722 / SRRC 167).